Reading from the N-terminus, the 1722-residue chain is Leucine-rich repeat- and IQ domain-containing protein 1 (1722 aa).

4 disordered regions span residues 23 to 47 (SLEK…TDSV), 182 to 202 (EDKE…QFQE), 265 to 285 (RTRF…QQNN), and 319 to 367 (QEWK…YEEK). The span at 38–47 (QSDDSDTDSV) shows a compositional bias: acidic residues. Residues 265-278 (RTRFKDQQEKEKNS) show a composition bias toward basic and acidic residues. The region spanning 283-312 (QNNAAVKIQAKYKAFVAYQKYGPIIKEQIE) is the IQ 1 domain. 10 LRR repeats span residues 819 to 840 (NLQF…SNCK), 841 to 861 (KLKY…ENLE), 862 to 883 (NLCV…DGCT), 884 to 905 (NIQC…FFLE), 970 to 991 (NLQQ…CDTP), 992 to 1013 (TIVY…ENCG), 1014 to 1035 (LLQI…ENLV), 1036 to 1057 (LLRE…SSYW), 1060 to 1081 (LLQN…FHFV), and 1082 to 1103 (SLEK…IKWF). Residues 1117–1157 (NPLLQETNWRDSLLKVLPALRILNGNILNSNSESRTEEHNQ) form the LRRCT domain. IQ domains lie at 1335 to 1364 (KIMA…LHTA) and 1395 to 1424 (REKA…AIKN). Residues 1506–1524 (SEHTQFNSRSENKTSSWTP) are compositionally biased toward polar residues. The interval 1506-1534 (SEHTQFNSRSENKTSSWTPESKTSRKSLL) is disordered.

This is Leucine-rich repeat- and IQ domain-containing protein 1 (LRRIQ1) from Homo sapiens (Human).